Reading from the N-terminus, the 577-residue chain is Urease subunit alpha (577 aa).

A Urease domain is found at 136–577; the sequence is GAIDCHVHLI…LPMAQRYFLF (442 aa). Ni(2+) is bound by residues histidine 141, histidine 143, and lysine 224. Position 224 is an N6-carboxylysine (lysine 224). Histidine 226 contributes to the substrate binding site. Ni(2+)-binding residues include histidine 253 and histidine 279. The active-site Proton donor is histidine 327. Position 367 (aspartate 367) interacts with Ni(2+).

This sequence belongs to the metallo-dependent hydrolases superfamily. Urease alpha subunit family. In terms of assembly, heterotrimer of UreA (gamma), UreB (beta) and UreC (alpha) subunits. Three heterotrimers associate to form the active enzyme. Ni cation serves as cofactor. In terms of processing, carboxylation allows a single lysine to coordinate two nickel ions.

The protein resides in the cytoplasm. It carries out the reaction urea + 2 H2O + H(+) = hydrogencarbonate + 2 NH4(+). The protein operates within nitrogen metabolism; urea degradation; CO(2) and NH(3) from urea (urease route): step 1/1. The chain is Urease subunit alpha from Mycobacterium marinum (strain ATCC BAA-535 / M).